Consider the following 115-residue polypeptide: uncharacterized protein (115 aa).

This is an uncharacterized protein from Human herpesvirus 6A (strain Uganda-1102) (HHV-6 variant A).